The primary structure comprises 162 residues: Selenoprotein F (162 aa).

The signal sequence occupies residues 1 to 28 (MAARRDGWLGPAFGLRLLLATVLQTVSA). A non-standard amino acid (selenocysteine) is located at residue Sec-93.

This sequence belongs to the selenoprotein M/F family. Forms a tight complex with UGGT1/UGCGL1. Interacts with UGGT2/UGCGL2. Interacts with RDH11.

Its subcellular location is the endoplasmic reticulum lumen. Functionally, may be involved in redox reactions associated with the formation of disulfide bonds. May contribute to the quality control of protein folding in the endoplasmic reticulum. May regulate protein folding by enhancing the catalytic activity of UGGT1/UGCGL1 and UGGT2/UGCGL2. In Bos taurus (Bovine), this protein is Selenoprotein F.